Reading from the N-terminus, the 394-residue chain is Elongation factor Tu (394 aa).

Positions 10-204 constitute a tr-type G domain; it reads KPHINVGTIG…FLDTYIPEPK (195 aa). The tract at residues 19-26 is G1; that stretch reads GHVDHGKT. 19–26 provides a ligand contact to GTP; that stretch reads GHVDHGKT. T26 is a Mg(2+) binding site. Residues 60-64 form a G2 region; it reads GITIN. Residues 81-84 form a G3 region; it reads DCPG. Residues 81–85 and 136–139 each bind GTP; these read DCPGH and NKCD. Positions 136–139 are G4; that stretch reads NKCD. The interval 174–176 is G5; that stretch reads SAL.

It belongs to the TRAFAC class translation factor GTPase superfamily. Classic translation factor GTPase family. EF-Tu/EF-1A subfamily. In terms of assembly, monomer.

It is found in the cytoplasm. It carries out the reaction GTP + H2O = GDP + phosphate + H(+). GTP hydrolase that promotes the GTP-dependent binding of aminoacyl-tRNA to the A-site of ribosomes during protein biosynthesis. The chain is Elongation factor Tu from Buchnera aphidicola subsp. Schizaphis graminum (strain Sg).